The primary structure comprises 458 residues: Type III intermediate filament (458 aa).

A head region spans residues 1–100 (MEKGYKMNRS…KVNRTNEKAE (100 aa)). The 309-residue stretch at 97–405 (EKAEMIELND…KLLEGEENRI (309 aa)) folds into the IF rod domain. Residues 406 to 458 (SMPLPSFGSMSLSDAMFEQQPFENRTSKKKIVIKTVETSGGDVISETTQKIED) are tail.

This sequence belongs to the intermediate filament family.

The sequence is that of Type III intermediate filament from Tetronarce californica (Pacific electric ray).